A 734-amino-acid chain; its full sequence is Photosystem I P700 chlorophyll a apoprotein A2 (734 aa).

Helical transmembrane passes span 46 to 69 (IFASHFGHLAIIFLWVSGNLFHVA), 135 to 158 (LYQGSIFLLILSALFLFAGWLHLQ), 175 to 199 (LNHHLAGLFGFSSLAWTGHLVHVAI), 273 to 291 (IAHHHLAIAVIFIIAGHMY), 330 to 353 (LHFQLALALASLGVVTSLVAQHMY), 369 to 395 (AALYTHHQYIATFIMCGAFAHGAIFLI), 417 to 439 (AIISHLSWVSLFLGFHTLGLYVH), and 517 to 535 (FLVHHAIALGLHTTTLILV). Cys559 and Cys568 together coordinate [4Fe-4S] cluster. The next 2 helical transmembrane spans lie at 575–596 (AFYLAVFWALNTVGWVTFYWHW) and 643–665 (LSVWSWMFLFGHLIWATGFMFLI). His654, Met662, and Tyr670 together coordinate chlorophyll a. Trp671 provides a ligand contact to phylloquinone. Residues 707–727 (VVGLAHFTVGYFLTYAAFLIA) traverse the membrane as a helical segment.

Belongs to the PsaA/PsaB family. In terms of assembly, the PsaA/B heterodimer binds the P700 chlorophyll special pair and subsequent electron acceptors. PSI consists of a core antenna complex that captures photons, and an electron transfer chain that converts photonic excitation into a charge separation. The cyanobacterial PSI reaction center is composed of one copy each of PsaA,B,C,D,E,F,I,J,K,L,M and X, and forms trimeric complexes. PSI electron transfer chain: 5 chlorophyll a, 1 chlorophyll a', 2 phylloquinones and 3 4Fe-4S clusters. PSI core antenna: 90 chlorophyll a, 22 carotenoids, 3 phospholipids and 1 galactolipid. P700 is a chlorophyll a/chlorophyll a' dimer, A0 is one or more chlorophyll a, A1 is one or both phylloquinones and FX is a shared 4Fe-4S iron-sulfur center. serves as cofactor.

The protein localises to the cellular thylakoid membrane. It catalyses the reaction reduced [plastocyanin] + hnu + oxidized [2Fe-2S]-[ferredoxin] = oxidized [plastocyanin] + reduced [2Fe-2S]-[ferredoxin]. PsaA and PsaB bind P700, the primary electron donor of photosystem I (PSI), as well as the electron acceptors A0, A1 and FX. PSI is a plastocyanin/cytochrome c6-ferredoxin oxidoreductase, converting photonic excitation into a charge separation, which transfers an electron from the donor P700 chlorophyll pair to the spectroscopically characterized acceptors A0, A1, FX, FA and FB in turn. Oxidized P700 is reduced on the lumenal side of the thylakoid membrane by plastocyanin or cytochrome c6. The protein is Photosystem I P700 chlorophyll a apoprotein A2 of Synechococcus elongatus (strain ATCC 33912 / PCC 7942 / FACHB-805) (Anacystis nidulans R2).